The chain runs to 182 residues: Glutathione-regulated potassium-efflux system ancillary protein KefG (182 aa).

It belongs to the NAD(P)H dehydrogenase (quinone) family. KefG subfamily. In terms of assembly, interacts with KefB.

It localises to the cell inner membrane. The enzyme catalyses a quinone + NADH + H(+) = a quinol + NAD(+). It catalyses the reaction a quinone + NADPH + H(+) = a quinol + NADP(+). Functionally, regulatory subunit of a potassium efflux system that confers protection against electrophiles. Required for full activity of KefB. This is Glutathione-regulated potassium-efflux system ancillary protein KefG from Yersinia pestis bv. Antiqua (strain Nepal516).